A 571-amino-acid polypeptide reads, in one-letter code: uncharacterized protein (571 aa).

Disordered stretches follow at residues 71-128 (TNHY…RVTA), 142-258 (NKND…PQNE), and 298-336 (LNRQPETRRNCQCPEKQQTPPPEETQNAQENDDQQTTKR). Residues 88-113 (PNRSGVSSPVNDGASSPTQRGGTTPA) are compositionally biased toward polar residues. Over residues 168-184 (RGYPGPGPRGYPGPGPR) the composition is skewed to pro residues. Over residues 205–215 (QGPRRYSCPGP) the composition is skewed to low complexity. Gly residues predominate over residues 217–234 (GYPGPGSSGRPDPGGGLQ). The span at 311–326 (PEKQQTPPPEETQNAQ) shows a compositional bias: low complexity.

This is an uncharacterized protein from Drosophila melanogaster (Fruit fly).